The sequence spans 145 residues: uncharacterized protein (145 aa).

Residues 1–41 (MEQHYHQQNQLRQLKQQQLKELLQQQSKDKEEDEQKHDDYR) adopt a coiled-coil conformation. The interval 1–91 (MEQHYHQQNQ…LQISEPEGES (91 aa)) is disordered. Over residues 7–26 (QQNQLRQLKQQQLKELLQQQ) the composition is skewed to low complexity. A compositionally biased stretch (basic and acidic residues) spans 27-42 (SKDKEEDEQKHDDYRS). Over residues 43–58 (PTKTTTTTATSTSAAT) the composition is skewed to low complexity.

This is an uncharacterized protein from Dictyostelium discoideum (Social amoeba).